A 654-amino-acid polypeptide reads, in one-letter code: Hemagglutinin-esterase-fusion glycoprotein (654 aa).

A signal peptide spans 1–14 (MFFSLLLMLGLTEA). The fusion domain-1 stretch occupies residues 15–40 (EKIKICLQKQVNSSFSLHNGFGGNLY). Residues 15–629 (EKIKICLQKQ…QSDPFYWGSS (615 aa)) lie on the Extracellular side of the membrane. Disulfide bonds link Cys-20–Cys-582, Cys-209–Cys-251, Cys-228–Cys-315, and Cys-236–Cys-288. Residues Asn-26 and Asn-61 are each glycosylated (N-linked (GlcNAc...) asparagine; by host). The segment at 41–157 (ATEEKRMFEL…KLNFQKSIYE (117 aa)) is esterase domain-1. Ser-71 acts as the Nucleophile in catalysis. Residues Asn-143 and Asn-188 are each glycosylated (N-linked (GlcNAc...) asparagine; by host). The N-acetyl-9-O-acetylneuraminic acid binding stretch occupies residues 157 to 309 (ELASQSHCMS…VRSSPRFLLM (153 aa)). Residues 309-363 (MPERSYCFDMKEKGPVTAVQSIWGKGRKSDYAVDQACLSTPGCMLIQKQKPYIGE) form an esterase domain-2 region. A fusion domain-2 region spans residues 364–654 (ADDHHGDQEM…ISGIAICRTK (291 aa)). Active-site charge relay system residues include Asp-365 and His-368. Residues Asn-394, Asn-551, and Asn-602 are each glycosylated (N-linked (GlcNAc...) asparagine; by host). A helical transmembrane segment spans residues 630 to 650 (LGLAITAANLMAALVISGIAI). The Cytoplasmic segment spans residues 651 to 654 (CRTK).

It belongs to the influenza viruses hemagglutinin family. As to quaternary structure, homotrimer of disulfide-linked HEF1-HEF2. In terms of processing, in natural infection, inactive HEF is matured into HEF1 and HEF2 outside the cell by one or more trypsin-like, arginine-specific endoprotease.

The protein resides in the virion membrane. The protein localises to the host cell membrane. The catalysed reaction is N-acetyl-9-O-acetylneuraminate + H2O = N-acetylneuraminate + acetate + H(+). The enzyme catalyses N-acetyl-4-O-acetylneuraminate + H2O = N-acetylneuraminate + acetate + H(+). Binds to the N-acetyl-9-O-acetylneuraminic acid residues on the cell surface, bringing about the attachment of the virus particle to the cell. Plays a major role in the determination of host range restriction and virulence. Class I viral fusion protein. Responsible for penetration of the virus into the cell cytoplasm by mediating the fusion of the membrane of the endocytosed virus particle with the endosomal membrane. Low pH in endosomes induce an irreversible conformational change in HEF2, releasing the fusion hydrophobic peptide. Several trimers are required to form a competent fusion pore. Displays a receptor-destroying activity which is a neuraminidate-O-acetyl esterase. This activity cleaves off any receptor on the cell surface, which would otherwise prevent virions release. These cleavages prevent self-aggregation and ensure the efficient spread of the progeny virus from cell to cell. This is Hemagglutinin-esterase-fusion glycoprotein from Influenza C virus (strain C/California/1978).